Reading from the N-terminus, the 314-residue chain is 2,3,4,5-tetrahydropyridine-2,6-dicarboxylate N-succinyltransferase (314 aa).

Asp163 and Glu180 together coordinate Mg(2+). Catalysis depends on Glu196, which acts as the Acyl-anhydride intermediate. Succinyl-CoA-binding positions include Arg198, Gly213, Ser216, Ala239, 254-255 (EA), Gly262, Lys274, and 287-290 (RRNS).

Belongs to the type 2 tetrahydrodipicolinate N-succinyltransferase family. Homotrimer.

The protein resides in the cytoplasm. It carries out the reaction (S)-2,3,4,5-tetrahydrodipicolinate + succinyl-CoA + H2O = (S)-2-succinylamino-6-oxoheptanedioate + CoA. The protein operates within amino-acid biosynthesis; L-lysine biosynthesis via DAP pathway; LL-2,6-diaminopimelate from (S)-tetrahydrodipicolinate (succinylase route): step 1/3. Functionally, catalyzes the conversion of the cyclic tetrahydrodipicolinate (THDP) into the acyclic N-succinyl-L-2-amino-6-oxopimelate using succinyl-CoA. This is 2,3,4,5-tetrahydropyridine-2,6-dicarboxylate N-succinyltransferase from Mycolicibacterium smegmatis (strain ATCC 700084 / mc(2)155) (Mycobacterium smegmatis).